Consider the following 156-residue polypeptide: Ribosomal RNA large subunit methyltransferase H (156 aa).

Residues Leu-73, Gly-104, and 123–128 contribute to the S-adenosyl-L-methionine site; that span reads LSKLTL.

The protein belongs to the RNA methyltransferase RlmH family. In terms of assembly, homodimer.

Its subcellular location is the cytoplasm. The catalysed reaction is pseudouridine(1915) in 23S rRNA + S-adenosyl-L-methionine = N(3)-methylpseudouridine(1915) in 23S rRNA + S-adenosyl-L-homocysteine + H(+). Specifically methylates the pseudouridine at position 1915 (m3Psi1915) in 23S rRNA. The sequence is that of Ribosomal RNA large subunit methyltransferase H from Hydrogenovibrio crunogenus (strain DSM 25203 / XCL-2) (Thiomicrospira crunogena).